A 430-amino-acid polypeptide reads, in one-letter code: MTVIAKIYAREILDSRGNPTLEAEVTLENAVCGRAAVPSGASTGTKEAVELRDGDKTRYLGKGVRAAVDNVNGVIAAALVGFDGADQTGLDHRLINLDGTENKGRLGANALLGVSLATAHAVAAARKQPLWMYLSTLGESKLSLPVPMMNIINGGAHADNNVDFQEFMVLPVGFASFSEALRAGTEIFHALKSVLKGQGLSTAVGDEGGFAPDFRSNVEALDAILEAIGRAGYIAGEDVLLGLDVASSEFRNNGKYNLVGENKRLTSEQFVDFLDDLVAQYPIISIEDGLAEDDWVGWKQLTERIGHKVQLVGDDLFVTNPKVFQEGITSGIANAILIKLNQIGTLTETLESIAMAHRAQYAAIVSHRSGETEDTSIADIAVATTATQIKTGSLCRSDRVAKYNQLLRIEQALGVGARYAGRDAFVSLKS.

Q165 is a binding site for (2R)-2-phosphoglycerate. E207 (proton donor) is an active-site residue. The Mg(2+) site is built by D244, E287, and D314. Positions 339, 368, 369, and 390 each coordinate (2R)-2-phosphoglycerate. The active-site Proton acceptor is K339.

The protein belongs to the enolase family. As to quaternary structure, component of the RNA degradosome, a multiprotein complex involved in RNA processing and mRNA degradation. Mg(2+) is required as a cofactor.

Its subcellular location is the cytoplasm. It localises to the secreted. It is found in the cell surface. The enzyme catalyses (2R)-2-phosphoglycerate = phosphoenolpyruvate + H2O. It participates in carbohydrate degradation; glycolysis; pyruvate from D-glyceraldehyde 3-phosphate: step 4/5. Its function is as follows. Catalyzes the reversible conversion of 2-phosphoglycerate (2-PG) into phosphoenolpyruvate (PEP). It is essential for the degradation of carbohydrates via glycolysis. The protein is Enolase of Xylella fastidiosa (strain M23).